The sequence spans 807 residues: Ribosome-releasing factor 2, mitochondrial (807 aa).

The transit peptide at 1–18 directs the protein to the mitochondrion; it reads MFCRKYVFQTWKQLSRSY. The tr-type G domain maps to 27-315; that stretch reads AKTRNIGIIA…GITKYLPSPL (289 aa). Residues 36–43, 100–104, and 154–157 each bind GTP; these read AHIDAGKT, DTPGH, and NKMD.

It belongs to the TRAFAC class translation factor GTPase superfamily. Classic translation factor GTPase family. EF-G/EF-2 subfamily.

It localises to the mitochondrion. Its function is as follows. Mitochondrial GTPase that mediates the disassembly of ribosomes from messenger RNA at the termination of mitochondrial protein biosynthesis. Not involved in the GTP-dependent ribosomal translocation step during translation elongation. The chain is Ribosome-releasing factor 2, mitochondrial from Candida albicans (strain SC5314 / ATCC MYA-2876) (Yeast).